We begin with the raw amino-acid sequence, 1070 residues long: DNA-directed RNA polymerase subunit beta (1070 aa).

This sequence belongs to the RNA polymerase beta chain family. As to quaternary structure, in plastids the minimal PEP RNA polymerase catalytic core is composed of four subunits: alpha, beta, beta', and beta''. When a (nuclear-encoded) sigma factor is associated with the core the holoenzyme is formed, which can initiate transcription.

It localises to the plastid. Its subcellular location is the chloroplast. It carries out the reaction RNA(n) + a ribonucleoside 5'-triphosphate = RNA(n+1) + diphosphate. In terms of biological role, DNA-dependent RNA polymerase catalyzes the transcription of DNA into RNA using the four ribonucleoside triphosphates as substrates. In Populus trichocarpa (Western balsam poplar), this protein is DNA-directed RNA polymerase subunit beta.